A 259-amino-acid chain; its full sequence is Phosphatidylglycerol--prolipoprotein diacylglyceryl transferase (259 aa).

4 helical membrane passes run 9–29 (IIFS…VIGI), 55–75 (FITY…VLLY), 92–112 (EGGM…YLFC), and 117–137 (INFL…LFLG). R138 lines the a 1,2-diacyl-sn-glycero-3-phospho-(1'-sn-glycerol) pocket. Helical transmembrane passes span 172–192 (QLYE…YTTF), 201–221 (GLNS…IEIF), and 228–248 (IGFI…MLLL).

Belongs to the Lgt family.

The protein resides in the cell inner membrane. It carries out the reaction L-cysteinyl-[prolipoprotein] + a 1,2-diacyl-sn-glycero-3-phospho-(1'-sn-glycerol) = an S-1,2-diacyl-sn-glyceryl-L-cysteinyl-[prolipoprotein] + sn-glycerol 1-phosphate + H(+). It participates in protein modification; lipoprotein biosynthesis (diacylglyceryl transfer). In terms of biological role, catalyzes the transfer of the diacylglyceryl group from phosphatidylglycerol to the sulfhydryl group of the N-terminal cysteine of a prolipoprotein, the first step in the formation of mature lipoproteins. The sequence is that of Phosphatidylglycerol--prolipoprotein diacylglyceryl transferase from Rickettsia africae (strain ESF-5).